Here is a 295-residue protein sequence, read N- to C-terminus: Cyclin-G1 (295 aa).

Belongs to the cyclin family. Cyclin G subfamily.

The protein resides in the nucleus. May play a role in growth regulation. Is associated with G2/M phase arrest in response to DNA damage. May be an intermediate by which p53 mediates its role as an inhibitor of cellular proliferation. The protein is Cyclin-G1 (CCNG1) of Bos taurus (Bovine).